A 258-amino-acid polypeptide reads, in one-letter code: Ureidoacrylate amidohydrolase RutB (258 aa).

The segment at 1-23 is disordered; the sequence is MDRPTTYPMDQPAGFRDAQGRHG. Asp-47 (proton acceptor) is an active-site residue. The active site involves Lys-156. Cys-189 acts as the Nucleophile in catalysis.

The protein belongs to the isochorismatase family. RutB subfamily.

The enzyme catalyses (Z)-3-ureidoacrylate + H2O + H(+) = (Z)-3-aminoacrylate + NH4(+) + CO2. It carries out the reaction (Z)-3-ureidoacrylate + H2O = (Z)-3-aminoacrylate + carbamate + H(+). It catalyses the reaction (Z)-2-methylureidoacrylate + H2O + H(+) = (Z)-2-methylaminoacrylate + NH4(+) + CO2. In terms of biological role, hydrolyzes ureidoacrylate to form aminoacrylate and carbamate. The carbamate hydrolyzes spontaneously, thereby releasing one of the nitrogen atoms of the pyrimidine ring as ammonia and one of its carbon atoms as CO2. This is Ureidoacrylate amidohydrolase RutB from Methylobacterium radiotolerans (strain ATCC 27329 / DSM 1819 / JCM 2831 / NBRC 15690 / NCIMB 10815 / 0-1).